A 137-amino-acid polypeptide reads, in one-letter code: uncharacterized protein (137 aa).

This is an uncharacterized protein from Schizosaccharomyces pombe (strain 972 / ATCC 24843) (Fission yeast).